Here is a 147-residue protein sequence, read N- to C-terminus: MHIWVDADACPNVIKDILYRASDRLKLPLTLVANQALRVHRSAYIRTVVVPRGFDVADEEIVRHIVAGDLVITADIPLAAAVLEKNSHALSPRGERYSPETIHERLRIRDMMEQLRDSGVRTGGPAALSQADRQAFANALDQLLVRA.

The protein belongs to the UPF0178 family.

In Acidithiobacillus ferrooxidans (strain ATCC 23270 / DSM 14882 / CIP 104768 / NCIMB 8455) (Ferrobacillus ferrooxidans (strain ATCC 23270)), this protein is UPF0178 protein AFE_3267.